The sequence spans 209 residues: MNLKDRRLKKIMEVLSLIFTFEIVASFILSTYNPPYQDLLIKLDYISIMFFTFEFIYNFYYVEDKAKFFKDIYNIVDAIVVIAFLLYSLQVFYSKAFLGLRVINLLRILVLLRIIKLRKLEENQALINFLTLLTICFIASCLIWIVESGVNPAINNFFDAFYFTTISITTVGYGDITPKTDAGKLIIIFSVLFFISGLITSLQKALKGD.

Residues 1-10 (MNLKDRRLKK) are Cytoplasmic-facing. A helical transmembrane segment spans residues 11–31 (IMEVLSLIFTFEIVASFILST). Residues 32-38 (YNPPYQD) are Extracellular-facing. A helical transmembrane segment spans residues 39-59 (LLIKLDYISIMFFTFEFIYNF). Residues 60–71 (YYVEDKAKFFKD) are Cytoplasmic-facing. The chain crosses the membrane as a helical span at residues 72 to 92 (IYNIVDAIVVIAFLLYSLQVF). At 93–96 (YSKA) the chain is on the extracellular side. The chain crosses the membrane as a helical; Voltage-sensor span at residues 97–117 (FLGLRVINLLRILVLLRIIKL). At 118–125 (RKLEENQA) the chain is on the cytoplasmic side. The helical transmembrane segment at 126–146 (LINFLTLLTICFIASCLIWIV) threads the bilayer. Over 147 to 181 (ESGVNPAINNFFDAFYFTTISITTVGYGDITPKTD) the chain is Extracellular. The short motif at 170–175 (TVGYGD) is the Selectivity filter element. The helical transmembrane segment at 182–202 (AGKLIIIFSVLFFISGLITSL) threads the bilayer. Topologically, residues 203–209 (QKALKGD) are cytoplasmic.

Belongs to the potassium channel family. In terms of assembly, homotetramer.

It is found in the cell membrane. In terms of biological role, voltage-gated potassium-selective channel opened by hyperpolarization. The sequence is that of Hyperpolarization-activated voltage-gated potassium channel (mvp) from Methanocaldococcus jannaschii (strain ATCC 43067 / DSM 2661 / JAL-1 / JCM 10045 / NBRC 100440) (Methanococcus jannaschii).